Reading from the N-terminus, the 83-residue chain is Small ribosomal subunit protein bS16 (83 aa).

This sequence belongs to the bacterial ribosomal protein bS16 family.

This is Small ribosomal subunit protein bS16 from Syntrophus aciditrophicus (strain SB).